The sequence spans 299 residues: uncharacterized protein (299 aa).

This is an uncharacterized protein from Acanthamoeba polyphaga mimivirus (APMV).